The sequence spans 346 residues: uncharacterized protein (346 aa).

It belongs to the MG067/MG068/MG395 family.

This is an uncharacterized protein from Mycoplasma pneumoniae (strain ATCC 29342 / M129 / Subtype 1) (Mycoplasmoides pneumoniae).